A 192-amino-acid polypeptide reads, in one-letter code: uncharacterized protein (192 aa).

This sequence to A.aeolicus AQ_054.

This is an uncharacterized protein from Thermotoga maritima (strain ATCC 43589 / DSM 3109 / JCM 10099 / NBRC 100826 / MSB8).